The chain runs to 84 residues: Large ribosomal subunit protein bL27 (84 aa).

Residues 1–22 (MAHKKAGGSTRNGRDSESKRLG) are disordered.

The protein belongs to the bacterial ribosomal protein bL27 family.

The protein is Large ribosomal subunit protein bL27 of Shewanella frigidimarina (strain NCIMB 400).